The primary structure comprises 361 residues: Probable sugar phosphate/phosphate translocator At1g12500 (361 aa).

Val2 is modified (N-acetylvaline). The next 9 helical transmembrane spans lie at 56-76, 90-110, 125-145, 153-173, 192-212, 240-260, 276-296, 306-326, and 329-349; these read TILT…VLLL, IFLT…VINI, FLKI…GNTS, FNQA…FLIT, IVLA…ICVA, LLLY…LYIE, LIIF…LTNF, TLQV…VLIF, and PVTV…VLYS. One can recognise an EamA domain in the interval 89–196; sequence PIFLTMTHML…PVVSGIVLAS (108 aa).

Belongs to the TPT transporter family. TPT (TC 2.A.7.9) subfamily.

The protein resides in the membrane. In Arabidopsis thaliana (Mouse-ear cress), this protein is Probable sugar phosphate/phosphate translocator At1g12500.